Consider the following 327-residue polypeptide: Cobalamin biosynthesis protein CobD (327 aa).

4 helical membrane-spanning segments follow: residues V63–F83, D84–Q104, F158–L178, and V305–L325.

This sequence belongs to the CobD/CbiB family.

It is found in the cell membrane. It participates in cofactor biosynthesis; adenosylcobalamin biosynthesis. Its function is as follows. Converts cobyric acid to cobinamide by the addition of aminopropanol on the F carboxylic group. This chain is Cobalamin biosynthesis protein CobD, found in Rhizobium meliloti (strain 1021) (Ensifer meliloti).